Reading from the N-terminus, the 528-residue chain is Glucosidase 2 subunit beta (528 aa).

Positions 1-14 are cleaved as a signal peptide; the sequence is MLLPLLLLLPMCWA. Residue serine 24 is modified to Phosphoserine; by FAM20C. 2 consecutive LDL-receptor class A domains span residues 37 to 71 and 72 to 113; these read FTCL…AACP and NGSF…VICE. 2 cysteine pairs are disulfide-bonded: cysteine 39/cysteine 58 and cysteine 56/cysteine 70. Aspartate 49 provides a ligand contact to substrate. Ca(2+) contacts are provided by glutamine 50, aspartate 53, tyrosine 55, aspartate 57, aspartate 63, and glutamate 64. Aspartate 53 lines the substrate pocket. Asparagine 72 carries N-linked (GlcNAc...) asparagine glycosylation. 3 disulfide bridges follow: cysteine 77-cysteine 99, cysteine 97-cysteine 112, and cysteine 100-cysteine 116. At serine 89 the chain carries Phosphoserine; by PKC. Ca(2+) is bound by residues arginine 91, aspartate 94, valine 96, aspartate 98, aspartate 104, and glutamate 105. Lysine 166 carries the post-translational modification N6-succinyllysine. Serine 168 carries the phosphoserine; by FAM20C modification. 2 EF-hand domains span residues 209 to 244 and 245 to 290; these read QEQE…DTDG and DGAL…TDLP. Ca(2+)-binding residues include aspartate 222, aspartate 224, aspartate 226, threonine 228, and glutamate 233. Disordered regions lie at residues 234 to 266 and 281 to 357; these read LQTH…TDAT and RSEA…DKMP. Residues 247–258 are compositionally biased toward low complexity; it reads ALSEAEAQALLS. A compositionally biased stretch (acidic residues) spans 312-337; sequence TEEEEEEEEEEEEEAEEEEEEEDSEE. Over residues 338–348 the composition is skewed to pro residues; the sequence is APPPLSPPQPA. Phosphoserine; by PKC is present on residues serine 383 and serine 390. The MRH domain occupies 413–514; that stretch reads SQCYELTTNE…ELMTPAACPE (102 aa). The cysteines at positions 415 and 428 are disulfide-linked. At serine 434 the chain carries Phosphoserine; by PKC. Cystine bridges form between cysteine 471/cysteine 500 and cysteine 485/cysteine 512. N-linked (GlcNAc...) asparagine glycosylation occurs at asparagine 476. Residues 525–528 carry the Prevents secretion from ER motif; it reads HDEL.

Heterodimer of a catalytic alpha subunit (GANAB) and a beta subunit (PRKCSH). Binds glycosylated PTPRC.

It localises to the endoplasmic reticulum. It functions in the pathway glycan metabolism; N-glycan metabolism. Functionally, regulatory subunit of glucosidase II that cleaves sequentially the 2 innermost alpha-1,3-linked glucose residues from the Glc(2)Man(9)GlcNAc(2) oligosaccharide precursor of immature glycoproteins. Required for efficient PKD1/Polycystin-1 biogenesis and trafficking to the plasma membrane of the primary cilia. This is Glucosidase 2 subunit beta from Homo sapiens (Human).